Here is a 102-residue protein sequence, read N- to C-terminus: Large ribosomal subunit protein bL21 (102 aa).

This sequence belongs to the bacterial ribosomal protein bL21 family. As to quaternary structure, part of the 50S ribosomal subunit. Contacts protein L20.

Its function is as follows. This protein binds to 23S rRNA in the presence of protein L20. The polypeptide is Large ribosomal subunit protein bL21 (Bifidobacterium longum subsp. infantis (strain ATCC 15697 / DSM 20088 / JCM 1222 / NCTC 11817 / S12)).